A 405-amino-acid polypeptide reads, in one-letter code: Homocitrate synthase AksA (405 aa).

Residues 23-274 form the Pyruvate carboxyltransferase domain; that stretch reads IEICDVTLRD…IERYDTTKLN (252 aa).

It belongs to the alpha-IPM synthase/homocitrate synthase family.

The catalysed reaction is acetyl-CoA + 2-oxoglutarate + H2O = (2R)-homocitrate + CoA + H(+). The enzyme catalyses 2-oxoadipate + acetyl-CoA + H2O = (R)-dihomocitrate + CoA + H(+). It catalyses the reaction 2-oxoheptanedioate + acetyl-CoA + H2O = (R)-trihomocitrate + CoA + H(+). It participates in organic acid metabolism; 2-oxosuberate biosynthesis. Its function is as follows. Catalyzes the condensation of alpha-ketoglutarate and acetyl-CoA to form (R)-homocitrate. Can also catalyze the condensation of alpha-ketoadipate with acetyl-CoA to form (R)-homo(2)citrate, and the condensation of alpha-ketopimelate with acetyl-CoA to form (R)-homo(3)citrate. These reactions are part of the biosynthesis pathway of coenzyme B and biotin. This Methanosarcina mazei (strain ATCC BAA-159 / DSM 3647 / Goe1 / Go1 / JCM 11833 / OCM 88) (Methanosarcina frisia) protein is Homocitrate synthase AksA (aksA).